We begin with the raw amino-acid sequence, 234 residues long: MKTNILTIIILSCVFSYGSQLAYADENLKDLKRSLRFAYNITPCDYENVEIAFVTTNSIHINTKQKRSECILYVDSIVSLGITDQFIKGDKVDVFGLPYNFSPPYVDNIYGGIVKHSNQGNKSLQFVGILNQDGKETYLPSEAVRIKKKQFTLQEFDFKIRKFLMEKYNIYDSESRYTSGSLFLATKDSKHYEVDLFNKDDKLLSRDSFFKRYKDNKIFNSEEISHFDIYLKTH.

Residues 1–24 (MKTNILTIIILSCVFSYGSQLAYA) form the signal peptide.

Belongs to the staphylococcal/streptococcal toxin family.

In terms of biological role, mitogenic for human peripheral blood lymphocytes. The polypeptide is Exotoxin type G (speG) (Streptococcus pyogenes serotype M1).